The chain runs to 287 residues: MRWQGRRESDNVEDRRNSSGGPSMGGPGFRLPSGKGGLILLIVVLVAGYYGVDLTGLMTGQPVSQQQSTRSISPNEDEAAKFTSVILATTEDTWGQQFEKMGKTYQQPKLVMYRGMTRTGCGAGQSIMGPFYCPADGTVYIDLSFYDDMKDKLGADGDFAQGYVIAHEVGHHVQKLLGIEPKVRQLQQNATQAEVNRLSVRMELQADCFAGVWGHSMQQQGVLETGDLEEALNAAQAIGDDRLQQQSQGRVVPDSFTHGTSQQRYSWFKRGFDSGDPAQCNTFGKSI.

Over residues 1–17 (MRWQGRRESDNVEDRRN) the composition is skewed to basic and acidic residues. Residues 1-29 (MRWQGRRESDNVEDRRNSSGGPSMGGPGF) form a disordered region. Residues 38–60 (LILLIVVLVAGYYGVDLTGLMTG) traverse the membrane as a helical segment.

It is found in the membrane. This is an uncharacterized protein from Escherichia coli O6:H1 (strain CFT073 / ATCC 700928 / UPEC).